Here is a 162-residue protein sequence, read N- to C-terminus: 2-C-methyl-D-erythritol 2,4-cyclodiphosphate synthase (162 aa).

The a divalent metal cation site is built by aspartate 10 and histidine 12. 4-CDP-2-C-methyl-D-erythritol 2-phosphate-binding positions include 10 to 12 (DVH) and 36 to 37 (HS). Histidine 44 is an a divalent metal cation binding site. Residues 58 to 60 (DIG), 63 to 67 (FPDTD), and arginine 144 contribute to the 4-CDP-2-C-methyl-D-erythritol 2-phosphate site.

Belongs to the IspF family. Homotrimer. A divalent metal cation is required as a cofactor.

The enzyme catalyses 4-CDP-2-C-methyl-D-erythritol 2-phosphate = 2-C-methyl-D-erythritol 2,4-cyclic diphosphate + CMP. Its pathway is isoprenoid biosynthesis; isopentenyl diphosphate biosynthesis via DXP pathway; isopentenyl diphosphate from 1-deoxy-D-xylulose 5-phosphate: step 4/6. In terms of biological role, involved in the biosynthesis of isopentenyl diphosphate (IPP) and dimethylallyl diphosphate (DMAPP), two major building blocks of isoprenoid compounds. Catalyzes the conversion of 4-diphosphocytidyl-2-C-methyl-D-erythritol 2-phosphate (CDP-ME2P) to 2-C-methyl-D-erythritol 2,4-cyclodiphosphate (ME-CPP) with a corresponding release of cytidine 5-monophosphate (CMP). This is 2-C-methyl-D-erythritol 2,4-cyclodiphosphate synthase from Laribacter hongkongensis (strain HLHK9).